A 156-amino-acid polypeptide reads, in one-letter code: Small ribosomal subunit protein uS7 (156 aa).

It belongs to the universal ribosomal protein uS7 family. As to quaternary structure, part of the 30S ribosomal subunit. Contacts proteins S9 and S11.

Its function is as follows. One of the primary rRNA binding proteins, it binds directly to 16S rRNA where it nucleates assembly of the head domain of the 30S subunit. Is located at the subunit interface close to the decoding center, probably blocks exit of the E-site tRNA. This chain is Small ribosomal subunit protein uS7, found in Pelobacter propionicus (strain DSM 2379 / NBRC 103807 / OttBd1).